The sequence spans 311 residues: Methionyl-tRNA formyltransferase (311 aa).

110–113 (SLLP) lines the (6S)-5,6,7,8-tetrahydrofolate pocket.

This sequence belongs to the Fmt family.

The enzyme catalyses L-methionyl-tRNA(fMet) + (6R)-10-formyltetrahydrofolate = N-formyl-L-methionyl-tRNA(fMet) + (6S)-5,6,7,8-tetrahydrofolate + H(+). Functionally, attaches a formyl group to the free amino group of methionyl-tRNA(fMet). The formyl group appears to play a dual role in the initiator identity of N-formylmethionyl-tRNA by promoting its recognition by IF2 and preventing the misappropriation of this tRNA by the elongation apparatus. This Streptococcus gordonii (strain Challis / ATCC 35105 / BCRC 15272 / CH1 / DL1 / V288) protein is Methionyl-tRNA formyltransferase.